The sequence spans 885 residues: Pyruvate, phosphate dikinase (885 aa).

Positions 1–342 (MQRVYAFEDG…LYMLQTRNGK (342 aa)) are N-terminal. Arg-91 lines the ATP pocket. Residues 343 to 399 (MNATATVRTGVDMVEEGLITKEQAIMRIAPQSVDQLLHKNMPANYAEAPLVKGLPAS) are linker 1. Residues 400–497 (PGAATGAVVF…EVHEGDILTI (98 aa)) are central. His-454 acts as the Tele-phosphohistidine intermediate in catalysis. Residues 498–533 (DGSTGCVYKGEVPLEEPQVGSGYFGTILKWANEIKK) form a linker 2 region. A C-terminal region spans residues 534–885 (IGVFANADLP…QAQIRHPREN (352 aa)). Residues Arg-561, Arg-617, Glu-752, Gly-773, Thr-774, Asn-775, and Asp-776 each contribute to the substrate site. Mg(2+) is bound at residue Glu-752. A Mg(2+)-binding site is contributed by Asp-776. Cys-839 serves as the catalytic Proton donor.

This sequence belongs to the PEP-utilizing enzyme family. In terms of assembly, homodimer. Requires Mg(2+) as cofactor.

The catalysed reaction is pyruvate + phosphate + ATP = phosphoenolpyruvate + AMP + diphosphate + H(+). In terms of biological role, catalyzes the dephosphorylation of phosphoenolpyruvate and diphosphate to produce ATP. The sequence is that of Pyruvate, phosphate dikinase from Entamoeba histolytica (strain ATCC 30459 / HM-1:IMSS / ABRM).